We begin with the raw amino-acid sequence, 555 residues long: Glycerol dehydratase large subunit (555 aa).

This sequence belongs to the diol/glycerol dehydratase large subunit family. In terms of assembly, probably consists of three subunits: large, medium, and small. The cofactor is adenosylcob(III)alamin.

It catalyses the reaction glycerol = 3-hydroxypropanal + H2O. In Citrobacter freundii, this protein is Glycerol dehydratase large subunit (dhaB).